A 49-amino-acid polypeptide reads, in one-letter code: uncharacterized protein (49 aa).

An N-terminal signal peptide occupies residues Met-1 to Ser-22.

This is an uncharacterized protein from Saccharomyces cerevisiae (strain ATCC 204508 / S288c) (Baker's yeast).